Consider the following 62-residue polypeptide: Photosystem II reaction center protein Z (62 aa).

2 helical membrane-spanning segments follow: residues 8-28 and 41-61; these read ALLA…VVFA and FSGL…NSFV.

This sequence belongs to the PsbZ family. PSII is composed of 1 copy each of membrane proteins PsbA, PsbB, PsbC, PsbD, PsbE, PsbF, PsbH, PsbI, PsbJ, PsbK, PsbL, PsbM, PsbT, PsbY, PsbZ, Psb30/Ycf12, at least 3 peripheral proteins of the oxygen-evolving complex and a large number of cofactors. It forms dimeric complexes.

It is found in the plastid. It localises to the chloroplast thylakoid membrane. Functionally, controls the interaction of photosystem II (PSII) cores with the light-harvesting antenna, aiding in the dissipation of excitation energy within PSII. PSII is a light-driven water plastoquinone oxidoreductase, using light energy to abstract electrons from H(2)O, generating a proton gradient subsequently used for ATP formation. The chain is Photosystem II reaction center protein Z from Chlamydomonas reinhardtii (Chlamydomonas smithii).